The sequence spans 435 residues: Glutamate-1-semialdehyde 2,1-aminomutase (435 aa).

K269 is modified (N6-(pyridoxal phosphate)lysine).

This sequence belongs to the class-III pyridoxal-phosphate-dependent aminotransferase family. HemL subfamily. As to quaternary structure, homodimer. Pyridoxal 5'-phosphate serves as cofactor.

Its subcellular location is the cytoplasm. It catalyses the reaction (S)-4-amino-5-oxopentanoate = 5-aminolevulinate. The protein operates within porphyrin-containing compound metabolism; protoporphyrin-IX biosynthesis; 5-aminolevulinate from L-glutamyl-tRNA(Glu): step 2/2. The sequence is that of Glutamate-1-semialdehyde 2,1-aminomutase from Gemmatimonas aurantiaca (strain DSM 14586 / JCM 11422 / NBRC 100505 / T-27).